A 625-amino-acid chain; its full sequence is Grainyhead-like protein 2 homolog (625 aa).

A transcription activation region spans residues 1-93; sequence MSQESDNNKR…KASDSQEDQD (93 aa). 2 disordered regions span residues 198 to 222 and 428 to 452; these read ASHSSYLKDDQRSTPDSTYSESFKD and EERKQNRKKGKGQASQAQCNNSSDG. The Grh/CP2 DB domain maps to 244–482; the sequence is GSGTFQYTLE…DLHSQPVLFI (239 aa). The span at 440 to 451 shows a compositional bias: polar residues; the sequence is QASQAQCNNSSD.

Belongs to the grh/CP2 family. Grainyhead subfamily. In terms of assembly, homodimer, also forms heterodimers with GRHL1 or GRHL3.

It is found in the nucleus. The protein resides in the membrane. Functionally, transcription factor playing an important role in primary neurulation and in epithelial development. Binds directly to the consensus DNA sequence 5'-AACCGGTT-3' acting as an activator and repressor on distinct target genes. During embryogenesis, plays unique and cooperative roles with GRHL3 in establishing distinct zones of primary neurulation. Essential for closure 3 (rostral end of the forebrain), functions cooperatively with GRHL3 in closure 2 (forebrain/midbrain boundary) and posterior neuropore closure. Regulates epithelial morphogenesis acting as a target gene-associated transcriptional activator of apical junctional complex components. Up-regulates of CLDN3 and CLDN4, as well as of RAB25, which increases the CLDN4 protein and its localization at tight junctions. Comprises an essential component of the transcriptional machinery that establishes appropriate expression levels of CLDN4 and CDH1 in different types of epithelia. Exhibits functional redundancy with GRHL3 in epidermal morphogenetic events such as eyelid fusion and epidermal wound repair. In lung, forms a regulatory loop with NKX2-1 that coordinates lung epithelial cell morphogenesis and differentiation. In keratinocytes, plays a role in telomerase activation during cellular proliferation, regulates TERT expression by binding to TERT promoter region and inhibiting DNA methylation at the 5'-CpG island, possibly by interfering with DNMT1 enzyme activity. In addition, impairs keratinocyte differentiation and epidermal function by inhibiting the expression of genes clustered at the epidermal differentiation complex (EDC) as well as GRHL1 and GRHL3 through epigenetic mechanisms. The protein is Grainyhead-like protein 2 homolog (Grhl2) of Mus musculus (Mouse).